Here is a 226-residue protein sequence, read N- to C-terminus: PKHD-type hydroxylase BP3529 (226 aa).

The Fe2OG dioxygenase domain maps to 78 to 178 (KIFPPLFNRY…RISAFFWLQS (101 aa)). Residues histidine 96, aspartate 98, and histidine 159 each contribute to the Fe cation site. Arginine 169 is a 2-oxoglutarate binding site.

Fe(2+) serves as cofactor. The cofactor is L-ascorbate.

In Bordetella pertussis (strain Tohama I / ATCC BAA-589 / NCTC 13251), this protein is PKHD-type hydroxylase BP3529.